A 735-amino-acid chain; its full sequence is Ion-translocating oxidoreductase complex subunit C (735 aa).

4Fe-4S ferredoxin-type domains lie at 368-397 and 407-436; these read MGAP…QQLY and KATA…VQYF. Positions 377, 380, 383, 387, 416, 419, 422, and 426 each coordinate [4Fe-4S] cluster. The disordered stretch occupies residues 534–711; the sequence is QARAKQAAHP…EPVEPADPRK (178 aa).

This sequence belongs to the 4Fe4S bacterial-type ferredoxin family. RnfC subfamily. In terms of assembly, the complex is composed of six subunits: RsxA, RsxB, RsxC, RsxD, RsxE and RsxG. The cofactor is [4Fe-4S] cluster.

It localises to the cell inner membrane. Part of a membrane-bound complex that couples electron transfer with translocation of ions across the membrane. Required to maintain the reduced state of SoxR. The protein is Ion-translocating oxidoreductase complex subunit C of Salmonella paratyphi A (strain ATCC 9150 / SARB42).